An 871-amino-acid chain; its full sequence is Probable inorganic carbon transporter subunit DabA (871 aa).

Residues C396, D398, H577, and C592 each coordinate Zn(2+).

Belongs to the inorganic carbon transporter (TC 9.A.2) DabA family. In terms of assembly, forms a complex with DabB. It depends on Zn(2+) as a cofactor.

The protein resides in the cell membrane. Functionally, part of an energy-coupled inorganic carbon pump. This Bacillus subtilis (strain 168) protein is Probable inorganic carbon transporter subunit DabA.